The chain runs to 82 residues: Small ribosomal subunit protein bS16 (82 aa).

Belongs to the bacterial ribosomal protein bS16 family.

This chain is Small ribosomal subunit protein bS16, found in Haemophilus influenzae (strain 86-028NP).